The chain runs to 174 residues: Heat shock protein 22 (174 aa).

Residues 44 to 154 form the sHSP domain; that stretch reads QIARWQEQEF…TLKEREVTIE (111 aa). Thr-152 carries the post-translational modification Phosphothreonine. A disordered region spans residues 152–174; it reads TIEQTGEPAKKSAEEPNDKAASQ. Basic and acidic residues predominate over residues 159–174; that stretch reads PAKKSAEEPNDKAASQ.

The protein belongs to the small heat shock protein (HSP20) family.

This Drosophila melanogaster (Fruit fly) protein is Heat shock protein 22 (Hsp22).